The primary structure comprises 144 residues: MLVTYILASVLLFSSVLGQRCSTTWGIRDTNYLIENLKDDPPSKCSCSGNVTSCLCLSVPTDDCTTPCYREGLLQLTNATQKSRLLPVFHRVKRIVEVLKNITCPSFSCEKPCNQTMAGNTLSFLKSLLGTFQKTEMQRQKSRP.

The signal sequence occupies residues 1–18 (MLVTYILASVLLFSSVLG). At glutamine 19 the chain carries Pyrrolidone carboxylic acid. N-linked (GlcNAc...) asparagine glycosylation is found at asparagine 50, asparagine 78, asparagine 101, and asparagine 114.

It belongs to the IL-7/IL-9 family. In terms of assembly, interacts with IL9R. Interacts with IL2RG.

The protein localises to the secreted. Functionally, multifunctional cytokine secreted mainly by T-helper 2 lymphocytes and also mast cells or NKT cells that plays important roles in the immune response against parasites. Affects intestinal epithelial permeability and adaptive immunity. In addition, induces the differentiation of specific T-cell subsets such as IL-17 producing helper T-cells (TH17) and also proliferation and differentiation of mast cells. Mechanistically, exerts its biological effects through a receptor composed of IL9R subunit and a signal transducing subunit IL2RG. Receptor stimulation results in the rapid activation of JAK1 and JAK3 kinase activities leading to STAT1, STAT3 and STAT5-mediated transcriptional programs. Induction of differentiation genes seems to be mediated by STAT1 alone, while protection of cells from apoptosis depends on STAT3 and STAT5. The sequence is that of Interleukin-9 (Il9) from Mus musculus (Mouse).